Reading from the N-terminus, the 130-residue chain is MGLLLLLVGIGGGFGAMARFALTQATASISKQIPLGILLCNIIGSLIIGMMAAFLIETKLFNEDVSTYVRFLLVTGFLGGFTTFSSFSLDILNLLQRGEIFIAIGYIMVSVLASLIAVILGFYIVMGVYK.

4 consecutive transmembrane segments (helical) span residues 2–22, 36–56, 71–91, and 100–120; these read GLLL…RFAL, GILL…AFLI, FLLV…SLDI, and IFIA…AVIL. Positions 79 and 82 each coordinate Na(+).

Belongs to the fluoride channel Fluc/FEX (TC 1.A.43) family.

Its subcellular location is the cell inner membrane. The enzyme catalyses fluoride(in) = fluoride(out). Na(+) is not transported, but it plays an essential structural role and its presence is essential for fluoride channel function. Its function is as follows. Fluoride-specific ion channel. Important for reducing fluoride concentration in the cell, thus reducing its toxicity. The polypeptide is Fluoride-specific ion channel FluC (Francisella tularensis subsp. tularensis (strain FSC 198)).